A 123-amino-acid chain; its full sequence is Pre-B lymphocyte protein 3 (123 aa).

An N-terminal signal peptide occupies residues 1-20 (MACRCLSFLLMGTFLSVSQT). The 103-residue stretch at 21–123 (VLAQLDALLV…YCSVGYGFSP (103 aa)) folds into the Ig-like domain. A disulfide bond links Cys-40 and Cys-115.

It belongs to the immunoglobulin superfamily. As to expression, expressed in B-cell precursors. Expressed in fetal liver, bone marrow, spleen and lymph node.

Its function is as follows. Associates with the Ig-mu chain to form a molecular complex that is expressed on the surface of pre-B-cells. This Homo sapiens (Human) protein is Pre-B lymphocyte protein 3 (VPREB3).